Consider the following 170-residue polypeptide: UPF0316 protein CLJ_B0679 (170 aa).

2 helical membrane-spanning segments follow: residues 1-21 (MLSYYAFIFFAKIMEVALMTI) and 36-56 (IIGFIEVTIWLYVTSSVLSGI).

Belongs to the UPF0316 family.

The protein localises to the cell membrane. The chain is UPF0316 protein CLJ_B0679 from Clostridium botulinum (strain 657 / Type Ba4).